The primary structure comprises 156 residues: Large ribosomal subunit protein uL15 (156 aa).

A compositionally biased stretch (basic residues) spans 1–16 (MVRRFKRAVKYRRGSR). The interval 1–35 (MVRRFKRAVKYRRGSRTHGWGRVGQHRKSGGSGGK) is disordered.

The protein belongs to the universal ribosomal protein uL15 family. Part of the 50S ribosomal subunit.

Functionally, binds to the 23S rRNA. The chain is Large ribosomal subunit protein uL15 from Pyrobaculum neutrophilum (strain DSM 2338 / JCM 9278 / NBRC 100436 / V24Sta) (Thermoproteus neutrophilus).